The sequence spans 513 residues: Bone morphogenetic protein 6 (513 aa).

A signal peptide spans 1-20 (MPGLGRRAQWLCWWWGLLCS). Residues 21 to 374 (CCGPPPLRPP…VSEVHVRTTR (354 aa)) constitute a propeptide that is removed on maturation. Disordered stretches follow at residues 38 to 66 (AAGG…SSGF), 89 to 131 (LPHR…RLKS), and 145 to 200 (ADND…ASPL). A compositionally biased stretch (low complexity) spans 98 to 121 (GLQQPQPPALRQQEEQQQQQQLPR). The segment covering 158–172 (QQSWPHEAASSSQRR) has biased composition (polar residues). 5 N-linked (GlcNAc...) asparagine glycosylation sites follow: N241, N269, N386, N404, and N454. The disordered stretch occupies residues 373 to 398 (TRSASSRRRQQSRNRSTQSQDVARVS). Disulfide bonds link C412–C478, C441–C510, and C445–C512.

Belongs to the TGF-beta family. In terms of assembly, interacts with SOSTDC1. Interacts (when glycosylated) with type I receptor ACVR1; the interaction may induce HAMP expression. Interacts with type II receptor ACVR2B. Interacts with Hemojuvelin/HJV. Interacts with ERFE; the interaction inhibits BMP-induced transcription of HAMP. Interacts with BMPR1A/ALK3. Forms heterodimers with BMP2 in vitro; the heterodimer then binds to its receptor BMPR1A /ALK3 and may induce HAMP expression. In terms of processing, glycosylated at Asn-454. Glycosylation is crucial for recognition by the activin receptor type I/ACVR1.

The protein resides in the secreted. Functionally, growth factor of the TGF-beta superfamily that plays essential roles in many developmental processes including cartilage and bone formation. Also plays an important role in the regulation of HAMP/hepcidin expression and iron metabolism by acting as a ligand for hemojuvelin/HJV. Also acts to promote expression of HAMP, potentially via the interaction with its receptor BMPR1A/ALK3. Initiates the canonical BMP signaling cascade by associating with type I receptor ACVR1 and type II receptor ACVR2B. In turn, ACVR1 propagates signal by phosphorylating SMAD1/5/8 that travel to the nucleus and act as activators and repressors of transcription of target. Can also signal through non-canonical pathway such as TAZ-Hippo signaling cascade to modulate VEGF signaling by regulating VEGFR2 expression. This is Bone morphogenetic protein 6 (BMP6) from Homo sapiens (Human).